Here is a 274-residue protein sequence, read N- to C-terminus: Acyl-[acyl-carrier-protein]--UDP-N-acetylglucosamine O-acyltransferase (274 aa).

It belongs to the transferase hexapeptide repeat family. LpxA subfamily. In terms of assembly, homotrimer.

It localises to the cytoplasm. It catalyses the reaction a (3R)-hydroxyacyl-[ACP] + UDP-N-acetyl-alpha-D-glucosamine = a UDP-3-O-[(3R)-3-hydroxyacyl]-N-acetyl-alpha-D-glucosamine + holo-[ACP]. Its pathway is glycolipid biosynthesis; lipid IV(A) biosynthesis; lipid IV(A) from (3R)-3-hydroxytetradecanoyl-[acyl-carrier-protein] and UDP-N-acetyl-alpha-D-glucosamine: step 1/6. Its function is as follows. Involved in the biosynthesis of lipid A, a phosphorylated glycolipid that anchors the lipopolysaccharide to the outer membrane of the cell. The polypeptide is Acyl-[acyl-carrier-protein]--UDP-N-acetylglucosamine O-acyltransferase (Bartonella quintana (strain Toulouse) (Rochalimaea quintana)).